The following is a 326-amino-acid chain: Ras association domain-containing protein 2 (326 aa).

In terms of domain architecture, Ras-associating spans 176-264 (YNHKTSVFTP…SKVFLMEKDQ (89 aa)). In terms of domain architecture, SARAH spans 272–319 (VAQYIKFEMPVLKSFIQKLQEEEDREVEKLMQKYTVLRLMIRQRLEEI).

As to quaternary structure, interacts directly with activated KRAS in a GTP-dependent manner. Interacts (via SARAH domain) with STK3/MST2 and STK4/MST1. In terms of processing, phosphorylated by STK3/MST2 and STK4/MST1.

Its subcellular location is the nucleus. The protein resides in the cytoplasm. It localises to the chromosome. The protein localises to the centromere. It is found in the kinetochore. Functionally, potential tumor suppressor. Acts as a KRAS-specific effector protein. May promote apoptosis and cell cycle arrest. Stabilizes STK3/MST2 by protecting it from proteasomal degradation. This chain is Ras association domain-containing protein 2 (Rassf2), found in Rattus norvegicus (Rat).